We begin with the raw amino-acid sequence, 473 residues long: Serine palmitoyltransferase 1 (473 aa).

At 1–15 the chain is on the lumenal side; the sequence is MATVAEQWVLVEMVQ. Residues 1-66 form an interaction with SPTLC2 region; it reads MATVAEQWVL…KEELIEEWQP (66 aa). The chain crosses the membrane as a helical span at residues 16-36; the sequence is ALYEAPAYHLILEGILILWII. Topologically, residues 37–473 are cytoplasmic; the sequence is RLLFSKTYKL…ISEVAQTVLL (437 aa). Y164 bears the Phosphotyrosine; by ABL mark.

Belongs to the class-II pyridoxal-phosphate-dependent aminotransferase family. As to quaternary structure, component of the serine palmitoyltransferase (SPT) complex, which is also composed of SPTLC2 or SPTLC3 and SPTSSA or SPTSSB. The heterodimer with SPTLC2 or SPTLC3 forms the catalytic core of the enzyme, while SPTSSA or SPTSSB subunits determine substrate specificity. SPT also interacts with ORMDL proteins, especially ORMDL3, which negatively regulate SPT activity in the presence of ceramides. Forms dimers of heterodimers with SPTLC2. Interacts with RTN4. The cofactor is pyridoxal 5'-phosphate. Post-translationally, phosphorylation at Tyr-164 inhibits activity and promotes cell survival.

Its subcellular location is the endoplasmic reticulum membrane. The enzyme catalyses L-serine + hexadecanoyl-CoA + H(+) = 3-oxosphinganine + CO2 + CoA. It catalyses the reaction octadecanoyl-CoA + L-serine + H(+) = 3-oxoeicosasphinganine + CO2 + CoA. The catalysed reaction is tetradecanoyl-CoA + L-serine + H(+) = 3-oxohexadecasphinganine + CO2 + CoA. It carries out the reaction dodecanoyl-CoA + L-serine + H(+) = 3-oxotetradecasphinganine + CO2 + CoA. It participates in lipid metabolism; sphingolipid metabolism. SPT complex catalytic activity is negatively regulated by ORMDL proteins, including ORMDL3, in the presence of ceramides. This mechanism allows to maintain ceramide levels at sufficient concentrations for the production of complex sphingolipids, but which prevents the accumulation of ceramides to levels that trigger apoptosis. In terms of biological role, component of the serine palmitoyltransferase multisubunit enzyme (SPT) that catalyzes the initial and rate-limiting step in sphingolipid biosynthesis by condensing L-serine and activated acyl-CoA (most commonly palmitoyl-CoA) to form long-chain bases. The SPT complex is also composed of SPTLC2 or SPTLC3 and SPTSSA or SPTSSB. Within this complex, the heterodimer with SPTLC2 or SPTLC3 forms the catalytic core. The composition of the serine palmitoyltransferase (SPT) complex determines the substrate preference. The SPTLC1-SPTLC2-SPTSSA complex shows a strong preference for C16-CoA substrate, while the SPTLC1-SPTLC3-SPTSSA isozyme uses both C14-CoA and C16-CoA as substrates, with a slight preference for C14-CoA. The SPTLC1-SPTLC2-SPTSSB complex shows a strong preference for C18-CoA substrate, while the SPTLC1-SPTLC3-SPTSSB isozyme displays an ability to use a broader range of acyl-CoAs, without apparent preference. Required for adipocyte cell viability and metabolic homeostasis. This Bos taurus (Bovine) protein is Serine palmitoyltransferase 1 (SPTLC1).